A 147-amino-acid chain; its full sequence is Hemoglobin subunit beta (147 aa).

The Globin domain maps to glutamate 2–histidine 147. Positions 63 and 92 each coordinate heme b.

Belongs to the globin family. In terms of assembly, heterotetramer of two alpha chains and two beta chains. Red blood cells.

In terms of biological role, involved in oxygen transport from gills to the various peripheral tissues. In Carassius auratus (Goldfish), this protein is Hemoglobin subunit beta (hbb).